Consider the following 254-residue polypeptide: 3-deoxy-manno-octulosonate cytidylyltransferase (254 aa).

The protein belongs to the KdsB family.

The protein resides in the cytoplasm. The enzyme catalyses 3-deoxy-alpha-D-manno-oct-2-ulosonate + CTP = CMP-3-deoxy-beta-D-manno-octulosonate + diphosphate. It functions in the pathway nucleotide-sugar biosynthesis; CMP-3-deoxy-D-manno-octulosonate biosynthesis; CMP-3-deoxy-D-manno-octulosonate from 3-deoxy-D-manno-octulosonate and CTP: step 1/1. Its pathway is bacterial outer membrane biogenesis; lipopolysaccharide biosynthesis. Activates KDO (a required 8-carbon sugar) for incorporation into bacterial lipopolysaccharide in Gram-negative bacteria. The protein is 3-deoxy-manno-octulosonate cytidylyltransferase of Pseudomonas aeruginosa (strain ATCC 15692 / DSM 22644 / CIP 104116 / JCM 14847 / LMG 12228 / 1C / PRS 101 / PAO1).